The primary structure comprises 287 residues: ATP synthase subunit a (287 aa).

A run of 6 helical transmembrane segments spans residues 38 to 58, 96 to 116, 139 to 161, 187 to 207, 225 to 245, and 259 to 279; these read DSMVLALLLGGLTLLILWTAA, FIAPLGLVVFVWVFLMNAMDM, VVPTADLSTTMGLALAVLGLRFW, PLFALILGLVNLLMQVIEYVA, LVFMLIALMGGAAALSLSGVL, and LFHILVITLQAFIFMMLALIY.

Belongs to the ATPase A chain family. As to quaternary structure, F-type ATPases have 2 components, CF(1) - the catalytic core - and CF(0) - the membrane proton channel. CF(1) has five subunits: alpha(3), beta(3), gamma(1), delta(1), epsilon(1). CF(0) has three main subunits: a(1), b(2) and c(9-12). The alpha and beta chains form an alternating ring which encloses part of the gamma chain. CF(1) is attached to CF(0) by a central stalk formed by the gamma and epsilon chains, while a peripheral stalk is formed by the delta and b chains.

It localises to the cell inner membrane. Functionally, key component of the proton channel; it plays a direct role in the translocation of protons across the membrane. The polypeptide is ATP synthase subunit a (Verminephrobacter eiseniae (strain EF01-2)).